We begin with the raw amino-acid sequence, 639 residues long: Nitrous-oxide reductase (639 aa).

The segment at residues 1-54 is a signal peptide (tat-type signal); it reads MSDKKDQVPGAVEAPRGVSRRSFLGTGAVTGAVLAGATALGAGTFTRESWAAAA. Positions 130, 131, and 179 each coordinate Cu cation. Residues Y257, E260, M268, D274, and N325 each contribute to the Ca(2+) site. Cu cation is bound by residues H327, H383, and H434. Residues K455 and E470 each contribute to the Ca(2+) site. Cu cation-binding residues include H495, H584, C619, W621, C623, H627, and M630. The COX2-like stretch occupies residues 543–639; sequence NKVRVYMTSM…MVGRMLVEKA (97 aa).

The protein belongs to the NosZ family. This sequence in the C-terminal section; belongs to the cytochrome c oxidase subunit 2 family. As to quaternary structure, homodimer. Ca(2+) serves as cofactor. The cofactor is Cu cation. Post-translationally, predicted to be exported by the Tat system. The position of the signal peptide cleavage has not been experimentally proven.

The protein localises to the periplasm. It carries out the reaction N2 + 2 Fe(III)-[cytochrome c] + H2O = nitrous oxide + 2 Fe(II)-[cytochrome c] + 2 H(+). Its pathway is nitrogen metabolism; nitrate reduction (denitrification); dinitrogen from nitrate: step 4/4. In terms of biological role, nitrous-oxide reductase is part of a bacterial respiratory system which is activated under anaerobic conditions in the presence of nitrate or nitrous oxide. This chain is Nitrous-oxide reductase (nosZ), found in Pseudomonas fluorescens.